The primary structure comprises 581 residues: Trehalase (581 aa).

The protein belongs to the glycosyl hydrolase 15 family. Monomer.

The enzyme catalyses alpha,alpha-trehalose + H2O = alpha-D-glucose + beta-D-glucose. It functions in the pathway glycan degradation; trehalose degradation; D-glucose from alpha,alpha-trehalose: step 1/1. Inhibited by validamycin A. Its function is as follows. Catalyzes the hydrolysis of alpha,alpha-trehalose into two molecules of D-glucose. The chain is Trehalase from Thermoplasma acidophilum (strain ATCC 25905 / DSM 1728 / JCM 9062 / NBRC 15155 / AMRC-C165).